A 564-amino-acid chain; its full sequence is Type 2 DNA topoisomerase 6 subunit B (564 aa).

ATP contacts are provided by residues Asn46, Asp78, 99–100 (TK), 109–116 (GQQGIGIS), and Lys471.

This sequence belongs to the TOP6B family. In terms of assembly, homodimer. Heterotetramer of two Top6A and two Top6B chains.

It carries out the reaction ATP-dependent breakage, passage and rejoining of double-stranded DNA.. Functionally, relaxes both positive and negative superturns and exhibits a strong decatenase activity. The protein is Type 2 DNA topoisomerase 6 subunit B of Pyrococcus abyssi (strain GE5 / Orsay).